The chain runs to 329 residues: Phosphoenolpyruvate transferase (329 aa).

Asp61 is a 7,8-didemethyl-8-hydroxy-5-deazariboflavin binding site.

It belongs to the CofD family. Homodimer. Mg(2+) is required as a cofactor.

It catalyses the reaction enolpyruvoyl-2-diphospho-5'-guanosine + 7,8-didemethyl-8-hydroxy-5-deazariboflavin = dehydro coenzyme F420-0 + GMP + H(+). The protein operates within cofactor biosynthesis; coenzyme F420 biosynthesis. Functionally, catalyzes the transfer of the phosphoenolpyruvate moiety from enoylpyruvoyl-2-diphospho-5'-guanosine (EPPG) to 7,8-didemethyl-8-hydroxy-5-deazariboflavin (FO) with the formation of dehydro coenzyme F420-0 and GMP. This is Phosphoenolpyruvate transferase from Mycobacterium marinum (strain ATCC BAA-535 / M).